Here is a 680-residue protein sequence, read N- to C-terminus: MPSVSKAAAAALSGSPPQTEKPTHYRYLKEFRTEQCPLFSQHKCAQHRPFTCFHWHFLNQRRRRPLRRRDGTFNYSPDVYCSKYNEATGVCPDGDECPYLHRTTGDTERKYHLRYYKTGTCIHETDARGHCVKNGLHCAFAHGPLDLRPPVCDVRELQAQEALQNGQLGGGEGVPDLQPGVLASQAMIEKILSEDPRWQDANFVLGSYKTEQCPKPPRLCRQGYACPHYHNSRDRRRNPRRFQYRSTPCPSVKHGDEWGEPSRCDGGDGCQYCHSRTEQQFHPESTKCNDMRQTGYCPRGPFCAFAHVEKSLGMVNEWGCHDLHLTSPSSTGSGQPGNAKRRDSPAEGGPRGSEQDSKQNHLAVFAAVHPPAPSVSSSVASSLASSAGSGSSSPTALPAPPARALPLGPASSTVEAVLGSALDLHLSNVNIASLEKDLEEQDGHDLGAAGPRSLAGSAPVAIPGSLPRAPSLHSPSSASTSPLGSLSQPLPGPVGSSAMTPPQQPPPLRSEPGTLGSAASSYSPLGLNGVPGSIWDFVSGSFSPSPSPILSAGPPSSSSASPNGAELARVRRQLDEAKRKIRQWEESWQQVKQVCDAWQREAQEAKERARVADSDRQLALQKKEEVEAQVIFQLRAKQCVACRERAHGAVLRPCQHHILCEPCAATAPECPYCKGQPLQW.

The tract at residues Met-1–Pro-22 is disordered. C3H1-type zinc fingers lie at residues Tyr-75–Thr-104, Tyr-115–Leu-145, Gln-243–Thr-277, and Pro-283–Lys-310. 4 stretches are compositionally biased toward low complexity: residues Thr-326 to Gly-337, Val-375 to Ala-396, Ser-465 to Ser-497, and Ser-545 to Pro-562. Disordered regions lie at residues Thr-326–Lys-358, Val-375–Pro-400, Asp-442–Ser-520, and Ser-545–Glu-566. A coiled-coil region spans residues Asn-563–Ala-619. The RING-type zinc-finger motif lies at Cys-639–Lys-674.

The protein belongs to the unkempt family. As to quaternary structure, isoform 4 (C-terminal) interacts with the GTP-bound form of RAC1. Isoform 4 (C-terminal) interacts with SMARCD2/BAF60b. In terms of processing, isoform 4 is ubiquitinated in the C-terminal. Ubiquitination is enhanced by activated RAC1. The presence of the RING finger domain is not essential for ubiquitination to occur.

It localises to the cytoplasm. It is found in the nucleus. Its pathway is protein modification; protein ubiquitination. In terms of biological role, may participate in a protein complex showing an E3 ligase activity regulated by RAC1. Ubiquitination is directed towards itself and possibly other substrates, such as SMARCD2/BAF60b. Intrinsic E3 ligase activity has not been proven. In Homo sapiens (Human), this protein is Putative E3 ubiquitin-protein ligase UNKL (UNKL).